The sequence spans 135 residues: Small ribosomal subunit protein uS12 (135 aa).

Residue D89 is modified to 3-methylthioaspartic acid. The tract at residues 108–135 is disordered; that stretch reads NKRTVSRSKYGTKKAKATDKKATDSKKK. Over residues 111-122 the composition is skewed to basic residues; the sequence is TVSRSKYGTKKA. Residues 123 to 135 are compositionally biased toward basic and acidic residues; sequence KATDKKATDSKKK.

It belongs to the universal ribosomal protein uS12 family. Part of the 30S ribosomal subunit. Contacts proteins S8 and S17. May interact with IF1 in the 30S initiation complex.

With S4 and S5 plays an important role in translational accuracy. Functionally, interacts with and stabilizes bases of the 16S rRNA that are involved in tRNA selection in the A site and with the mRNA backbone. Located at the interface of the 30S and 50S subunits, it traverses the body of the 30S subunit contacting proteins on the other side and probably holding the rRNA structure together. The combined cluster of proteins S8, S12 and S17 appears to hold together the shoulder and platform of the 30S subunit. The protein is Small ribosomal subunit protein uS12 of Helicobacter pylori (strain HPAG1).